Reading from the N-terminus, the 549-residue chain is Polymorphic pseudokinase ROP5 (549 aa).

A signal peptide spans 1–24; that stretch reads MATKLARLATWLVLVGCLLWRAGA. The Protein kinase domain maps to 234 to 527; the sequence is LKLVEPLRVG…LEAMETPEFL (294 aa). ATP-binding residues include Arg241, Asp244, Arg245, Ser246, Lys263, Met337, Pro338, Ala340, Asp343, and Asp393. Asp244 contributes to the ADP binding site. ADP is bound by residues Ser246, Lys263, Met337, Pro338, and Ala340. Residue Asp393 participates in ADP binding. Residues Asp393 and Asp407 each coordinate Mg(2+). Asn434 carries an N-linked (GlcNAc...) asparagine glycan. A disulfide bond links Cys458 and Cys492.

It belongs to the protein kinase superfamily. Ser/Thr protein kinase family. Component of a complex at least composed of ROP18 and ROP5. Interacts with GRA7. Interacts with ROP17. Interacts with mouse IRGA6/IIGP1; the interaction results in inhibition of IRGA6/IIGP1 GTPase activity and/or oligomerization.

Its subcellular location is the secreted. The protein resides in the parasitophorous vacuole. The protein localises to the cytoplasmic vesicle. It is found in the secretory vesicle. It localises to the rhoptry. Pseudokinase. Essential for virulence in the type I lineage. Mediates parasite survival in mouse monocytes. Required for the parasite ability to resist mouse innate immune effectors triggered by the IFN-gamma (IFNG). Reduces the accumulation of mouse IRGA6 (IIGP1) and IRGB6 (TGTP1/TGTP2), immunity-related GTPases (IRGs) that protect mice from infection by certain intracellular pathogens, on the parasitophorous vacuole and IRG-mediated killing of parasites by mouse cells. Regulates the activity of ROP18, an active kinase that targets IRGs to prevent IRG-mediated parasite killing by mouse cells. Acts as an allosteric inhibitor of mouse IRGA6 (IIGP1). Does not affect IFN-gamma (IFNG)-mediated parasite killing in human cells that do not possess the large variety of IRGs. This Toxoplasma gondii protein is Polymorphic pseudokinase ROP5.